A 539-amino-acid polypeptide reads, in one-letter code: MIO-dependent tyrosine 2,3-aminomutase (539 aa).

Y63 functions as the Proton donor/acceptor in the catalytic mechanism. H93 provides a ligand contact to substrate. Positions 152–154 form a cross-link, 5-imidazolinone (Ala-Gly); the sequence is ASG. S153 bears the 2,3-didehydroalanine (Ser) mark. The substrate site is built by N205 and R311.

It belongs to the TAL/TAM family. As to quaternary structure, homotetramer; dimer of dimers. In terms of processing, contains an active site 4-methylidene-imidazol-5-one (MIO), which is formed autocatalytically by cyclization and dehydration of residues Ala-Ser-Gly.

The catalysed reaction is L-tyrosine = 3-amino-3-(4-hydroxyphenyl)propanoate. The enzyme catalyses L-tyrosine = (E)-4-coumarate + NH4(+). In terms of biological role, involved in the biosynthesis of the enediyne antitumor antibiotic C-1027. Catalyzes the MIO-dependent deamination of L-tyrosine generating the corresponding alpha,beta-unsaturated acid, (S)-beta-tyrosine. This is MIO-dependent tyrosine 2,3-aminomutase from Streptomyces globisporus.